Here is a 250-residue protein sequence, read N- to C-terminus: 5-oxoprolinase subunit A (250 aa).

This sequence belongs to the LamB/PxpA family. Forms a complex composed of PxpA, PxpB and PxpC.

The enzyme catalyses 5-oxo-L-proline + ATP + 2 H2O = L-glutamate + ADP + phosphate + H(+). Its function is as follows. Catalyzes the cleavage of 5-oxoproline to form L-glutamate coupled to the hydrolysis of ATP to ADP and inorganic phosphate. This is 5-oxoprolinase subunit A from Pseudomonas fluorescens (strain ATCC BAA-477 / NRRL B-23932 / Pf-5).